The primary structure comprises 1207 residues: Systemin receptor SR160 (1207 aa).

An N-terminal signal peptide occupies residues 1–34; sequence MKAHKTVFNQHPLSLNKLFFVLLLIFFLPPASPA. A Cys pair 1 motif is present at residues 71–78; the sequence is CSFTGVSC. 20 LRR repeats span residues 109–131, 135–157, 161–181, 186–207, 213–234, 235–257, 258–280, 282–304, 305–325, 329–350, 353–375, 378–401, 402–423, 428–450, 452–474, 476–499, 500–523, 524–547, 548–570, and 572–594; these read NLESLVLKNANLSGSLTSAAKSQ, TLDSIDLAENTISGPISDISSFG, NLKSLNLSKNFLDPPGKEMLK, SLQVLDLSYNNISGFNLFPWVS, ELEFFSIKGNKLAGSIPELDFK, NLSYLDLSANNFSTVFPSFKDCS, NLQHLDLSSNKFYGDIGSSLSSC, KLSFLNLTNNQFVGLVPKLPSES, LQYLYLRGNDFQGVYPNQLAD, TVVELDLSYNNFSGMVPESLGE, SLELVDISNNNFSGKLPVDTLLK, NIKTMVLSFNKFVGGLPDSFSNLP, KLETLDMSSNNLTGIIPSGICK, NLKVLYLQNNLFKGPIPDSLSNC, QLVSLDLSFNYLTGSIPSSLGSL, KLKDLILWLNQLSGEIPQELMYLQ, ALENLILDFNDLTGPIPASLSNCT, KLNWISLSNNQLSGEIPASLGRLS, NLAILKLGNNSISGNIPAELGNC, and SLIWLDLNTNFLNGSIPPPLFKQ. Asparagine 119 is a glycosylation site (N-linked (GlcNAc...) asparagine). Residues asparagine 166 and asparagine 196 are each glycosylated (N-linked (GlcNAc...) asparagine). N-linked (GlcNAc...) asparagine glycans are attached at residues asparagine 235 and asparagine 245. An N-linked (GlcNAc...) asparagine glycan is attached at asparagine 287. N-linked (GlcNAc...) asparagine glycosylation is found at asparagine 339 and asparagine 363. Asparagine 412 and asparagine 449 each carry an N-linked (GlcNAc...) asparagine glycan. The N-linked (GlcNAc...) asparagine glycan is linked to asparagine 521. Asparagine 556, asparagine 584, asparagine 646, and asparagine 662 each carry an N-linked (GlcNAc...) asparagine glycan. LRR repeat units lie at residues 664 to 686, 688 to 711, 712 to 735, and 736 to 758; these read SMIFLDLSYNKLEGSIPKELGAM, YLSILNLGHNDLSGMIPQQLGGLK, NVAILDLSYNRFNGTIPNSLTSLT, and LLGEIDLSNNNLSGMIPESAPFD. N-linked (GlcNAc...) asparagine glycans are attached at residues asparagine 724, asparagine 746, and asparagine 767. The Cys pair 2 signature appears at 771–779; that stretch reads CGYPLPLPC. The chain crosses the membrane as a helical span at residues 803 to 823; sequence SVAMGLLFSLFCIFGLIIVAI. The region spanning 888–1163 is the Protein kinase domain; sequence FHNDSLVGSG…IQVMAMFKEI (276 aa). ATP-binding positions include 894 to 902 and lysine 916; that span reads VGSGGFGDV. Catalysis depends on aspartate 1014, which acts as the Proton acceptor.

This sequence belongs to the protein kinase superfamily. Ser/Thr protein kinase family. Glycosylated.

It localises to the cell membrane. The enzyme catalyses L-seryl-[protein] + ATP = O-phospho-L-seryl-[protein] + ADP + H(+). It carries out the reaction L-threonyl-[protein] + ATP = O-phospho-L-threonyl-[protein] + ADP + H(+). Receptor with a serine/threonine-protein kinase activity. Involved in the perception of systemin, a peptide hormone responsible for the systemic activation of defense genes in leaves of wounded plants. May also regulate, in response to brassinosteroid binding, a signaling cascade involved in plant development. The protein is Systemin receptor SR160 of Solanum peruvianum (Peruvian tomato).